A 79-amino-acid chain; its full sequence is Small ribosomal subunit protein bS18 (79 aa).

Belongs to the bacterial ribosomal protein bS18 family. Part of the 30S ribosomal subunit. Forms a tight heterodimer with protein bS6.

In terms of biological role, binds as a heterodimer with protein bS6 to the central domain of the 16S rRNA, where it helps stabilize the platform of the 30S subunit. This Onion yellows phytoplasma (strain OY-M) protein is Small ribosomal subunit protein bS18.